A 535-amino-acid polypeptide reads, in one-letter code: T-complex protein 1 subunit zeta 1 (535 aa).

Belongs to the TCP-1 chaperonin family. In terms of assembly, heterooligomeric complex of about 850 to 900 kDa that forms two stacked rings, 12 to 16 nm in diameter.

Its subcellular location is the cytoplasm. Its function is as follows. Molecular chaperone; assists the folding of proteins upon ATP hydrolysis. Known to play a role, in vitro, in the folding of actin and tubulin. This Arabidopsis thaliana (Mouse-ear cress) protein is T-complex protein 1 subunit zeta 1.